The chain runs to 296 residues: Myeloid differentiation primary response protein MyD88 (296 aa).

Residues 54 to 109 (MDFEYLEIRQLETQADPTGRLLDAWQGRPGASVGRLLELLTKLGRDDVLLELGPSI) enclose the Death domain. The interval 110-155 (EEDCQKYILKQQQEEAEKPLQVAAVDSSVPRTAELAGITTLDDPLG) is intermediate domain. The region spanning 159 to 293 (ERFDAFICYC…WFWTRLAKAL (135 aa)) is the TIR domain. Ser244 carries the phosphoserine modification.

In terms of assembly, homodimer. Also forms heterodimers with TIRAP. Binds to TLR2, TLR5, IRAK1, IRAK2 and IRAK4 via their respective TIR domains. Interacts with IL18R1. Interacts with BMX, IL1RL1, IKBKE and IRF7. Interacts with LRRFIP1 and LRRFIP2; this interaction positively regulates Toll-like receptor (TLR) signaling in response to agonist. Interacts with FLII. LRRFIP1 and LRRFIP2 compete with FLII for MYD88-binding. Interacts with IRF1. Upon IL1B treatment, forms a complex with PELI1, IRAK1, IRAK4 and TRAF6; this complex recruits MAP3K7/TAK1, TAB1 and TAB2 to mediate NF-kappa-B activation. Direct binding of SMAD6 to PELI1 prevents the complex formation and hence negatively regulates IL1R-TLR signaling and eventually NF-kappa-B-mediated gene expression. May interact with PIK3AP1. Interacts (via TIR domain) with DHX9 (via H2A and OB-fold regions); this interaction is direct. Interacts with OTUD4 deubiquitinase; the interaction is direct. Interacts with TLR4. (Microbial infection) In case of infection, interacts with uropathogenic E.coli protein TcpC; suppressing Toll-like receptor (TLR)-mediated cytokine production. As to quaternary structure, (Microbial infection) In case of infection, interacts with uropathogenic E.faecalis protein TcpF; suppressing Toll-like receptor (TLR)-mediated cytokine production. In terms of assembly, (Microbial infection) In case of infection, interacts with B.melitensis protein TcpB. (Microbial infection) Interacts with human metapneumovirus protein M2-2; this interaction prevents MYD88-mediated cytokine secretion. Ubiquitinated; undergoes 'Lys-63'-linked polyubiquitination. OTUD4 specifically hydrolyzes 'Lys-63'-linked polyubiquitinated MYD88. Deubiquitinated by USP3 that cleaves 'Lys-63'-linked ubiquitin chains leading to inhibition of MYD88-induced NF-kappa-B signaling. Post-translationally, (Microbial infection) Ubiquitinated by human herpesvirus 8 (KSHV) protein RTA/ORF50, leading to proteasomal degradation ans suppression of TLR4 signaling pathway. As to expression, ubiquitous.

It localises to the cytoplasm. The protein resides in the nucleus. Functionally, adapter protein involved in the Toll-like receptor and IL-1 receptor signaling pathway in the innate immune response. Acts via IRAK1, IRAK2, IRF7 and TRAF6, leading to NF-kappa-B activation, cytokine secretion and the inflammatory response. Increases IL-8 transcription. Involved in IL-18-mediated signaling pathway. Activates IRF1 resulting in its rapid migration into the nucleus to mediate an efficient induction of IFN-beta, NOS2/INOS, and IL12A genes. Upon TLR8 activation by GU-rich single-stranded RNA (GU-rich RNA) derived from viruses such as SARS-CoV-2, SARS-CoV and HIV-1, induces IL1B release through NLRP3 inflammasome activation. MyD88-mediated signaling in intestinal epithelial cells is crucial for maintenance of gut homeostasis and controls the expression of the antimicrobial lectin REG3G in the small intestine. The protein is Myeloid differentiation primary response protein MyD88 of Homo sapiens (Human).